A 448-amino-acid polypeptide reads, in one-letter code: Homogentisate 1,2-dioxygenase (448 aa).

Histidine 302 acts as the Proton acceptor in catalysis. Fe cation contacts are provided by histidine 345 and glutamate 351. 2 residues coordinate homogentisate: tyrosine 360 and histidine 381. Residue histidine 381 coordinates Fe cation.

It belongs to the homogentisate dioxygenase family. Hexamer; dimer of trimers. Fe cation is required as a cofactor.

The catalysed reaction is homogentisate + O2 = 4-maleylacetoacetate + H(+). It functions in the pathway amino-acid degradation; L-phenylalanine degradation; acetoacetate and fumarate from L-phenylalanine: step 4/6. In terms of biological role, involved in the catabolism of homogentisate (2,5-dihydroxyphenylacetate or 2,5-OH-PhAc), a central intermediate in the degradation of phenylalanine and tyrosine. Catalyzes the oxidative ring cleavage of the aromatic ring of homogentisate to yield maleylacetoacetate. The protein is Homogentisate 1,2-dioxygenase of Ralstonia pickettii (strain 12J).